A 122-amino-acid chain; its full sequence is High-potential iron-sulfur protein (122 aa).

A signal peptide spans 1 to 37; sequence MSDKPISKSRRDAVKVMLGTAAAIPMINLVGFGTARA. [4Fe-4S] cluster-binding residues include cysteine 80, cysteine 83, cysteine 100, and cysteine 114.

It belongs to the high-potential iron-sulfur protein (HiPIP) family. In terms of assembly, homodimer.

Its subcellular location is the periplasm. Functionally, specific class of high-redox-potential 4Fe-4S ferredoxins. Functions in anaerobic electron transport in most purple and in some other photosynthetic bacteria and in at least one genus (Paracoccus) of halophilic, denitrifying bacteria. This Allochromatium vinosum (strain ATCC 17899 / DSM 180 / NBRC 103801 / NCIMB 10441 / D) (Chromatium vinosum) protein is High-potential iron-sulfur protein (hip).